The following is a 260-amino-acid chain: Small ribosomal subunit protein uS2 (260 aa).

Residues 223–260 (EGRQGEDEEEASQEVAEGVSKDSLEDLKKSVEEGSNEE) form a disordered region. Basic and acidic residues predominate over residues 241–254 (VSKDSLEDLKKSVE).

It belongs to the universal ribosomal protein uS2 family.

This is Small ribosomal subunit protein uS2 from Pediococcus pentosaceus (strain ATCC 25745 / CCUG 21536 / LMG 10740 / 183-1w).